The following is a 264-amino-acid chain: Phosphoribosylaminoimidazole-succinocarboxamide synthase (264 aa).

Belongs to the SAICAR synthetase family.

It carries out the reaction 5-amino-1-(5-phospho-D-ribosyl)imidazole-4-carboxylate + L-aspartate + ATP = (2S)-2-[5-amino-1-(5-phospho-beta-D-ribosyl)imidazole-4-carboxamido]succinate + ADP + phosphate + 2 H(+). It functions in the pathway purine metabolism; IMP biosynthesis via de novo pathway; 5-amino-1-(5-phospho-D-ribosyl)imidazole-4-carboxamide from 5-amino-1-(5-phospho-D-ribosyl)imidazole-4-carboxylate: step 1/2. This Synechocystis sp. (strain ATCC 27184 / PCC 6803 / Kazusa) protein is Phosphoribosylaminoimidazole-succinocarboxamide synthase (purC).